Reading from the N-terminus, the 178-residue chain is uncharacterized protein (178 aa).

This is an uncharacterized protein from Escherichia coli (strain K12).